An 884-amino-acid chain; its full sequence is MGSTGEPDRKRRLSSSVAPGGGAPVSPAKRLAVAPTSEDKKLDFTVLKYKNQKLSEQLEAHKFEYRALENKFAGLKEKQRTHNETLSLVNSSWEQLVADLKSRSFCKSGSPNSSPGSGHNNVQKDGTCAPIERDTLRSLVESGATESSGCLPGCHLGSDAPPLHLSTANALGDIFFPSSDLLQANEECALAALTKLPENDRSKQLQSTSSNLLSSLNNVVQALSNLQLKHKQLAEDYQNQRDSSARKRAEHRRLKEELASAASELEETNYKLAALKAQRDNTQGARIPYPTLGNKNMPEDKVRDKQREMQDLEATHKELSELISKRLVEIKRLHEERIEILNKIATFQNILMDFKSIRSSKAFQLVNDRLQKSQAELDHYQTLLEKLQVDKDKFVWQERQFNLKVDLAEIPERVSTYCESSIADLKKDIQKLCDEKNMLILKLEEASREPGRNQVITKFKALVSSIPREMGAMQSEMTKHKEASLELNSLRAEVHSLSRILSRKERDNEEASCRSARAGSDITQLQSVISDLKQTNKELKLFADMYKRESTDSREIMESRDREFLEWAHVHALKSSLDESKLEQRVKAANEAEAITQQRLATAEAEIAESGQKLGTSRKDLVSLSHMLKSKQEECEAYRVEVECIGQAYEDIQAQNQQLLQQIIERDDDNTKIFMEGVKAKQTQDALHLETYSLRRNLQQESSLMDLYNQKIVSLEDQLKMWSDRVGKLQEDGWQQSVSLSNYQRKLVDVHRDAQKLMQSLDGIQANVGSSRLEVADLLIELEKERFSKKRIEDDLEVMSRKASSLRAKARESAVLEKLRHEVKEYRGILKCGICHDRQKEVVITKCYHLFCNQCIQKSLGNRQRRCPSCSLSFGANDVKPIYI.

A disordered region spans residues 1-37 (MGSTGEPDRKRRLSSSVAPGGGAPVSPAKRLAVAPTS). Residues 49–86 (YKNQKLSEQLEAHKFEYRALENKFAGLKEKQRTHNETL) are a coiled coil. The segment at 107–127 (KSGSPNSSPGSGHNNVQKDGT) is disordered. Residues 108 to 121 (SGSPNSSPGSGHNN) show a composition bias toward low complexity. Coiled-coil stretches lie at residues 216–541 (LNNV…ELKL), 580–663 (SKLE…LQQI), 696–762 (RNLQ…QSLD), and 789–827 (KKRIEDDLEVMSRKASSLRAKARESAVLEKLRHEVKEYR). The RING-type zinc-finger motif lies at 832–871 (CGICHDRQKEVVITKCYHLFCNQCIQKSLGNRQRRCPSCS).

The protein belongs to the BRE1 family. In terms of assembly, interacts with SKIPA. Interacts with HUB2.

It is found in the nucleus. The enzyme catalyses S-ubiquitinyl-[E2 ubiquitin-conjugating enzyme]-L-cysteine + [acceptor protein]-L-lysine = [E2 ubiquitin-conjugating enzyme]-L-cysteine + N(6)-ubiquitinyl-[acceptor protein]-L-lysine.. It participates in protein modification; protein ubiquitination. Its function is as follows. E3 ubiquitin-protein ligase that monoubiquitinates H2B to form H2BK143ub1. H2BK143ub1 gives a specific tag for epigenetic transcriptional activation and is a prerequisite for H3 Lys-4 methylation (H3K4me). It thereby plays a central role in histone code and gene regulation. H2B monoubiquitination (H2BK143ub1), mediated by HUB1, modulates transcriptional regulation of anther development, likely by promoting histone H3K4 dimethylation (H3K4me2) in the chromatin of the key tapetum degradation-related genes C4, CP1 and UDT1. This is E3 ubiquitin-protein ligase BRE1-like 1 from Oryza sativa subsp. japonica (Rice).